A 284-amino-acid chain; its full sequence is 4-diphosphocytidyl-2-C-methyl-D-erythritol kinase (284 aa).

The active site involves Lys14. 98 to 108 lines the ATP pocket; the sequence is PMGGGLGGGSS. Asp140 is a catalytic residue.

Belongs to the GHMP kinase family. IspE subfamily.

The enzyme catalyses 4-CDP-2-C-methyl-D-erythritol + ATP = 4-CDP-2-C-methyl-D-erythritol 2-phosphate + ADP + H(+). It participates in isoprenoid biosynthesis; isopentenyl diphosphate biosynthesis via DXP pathway; isopentenyl diphosphate from 1-deoxy-D-xylulose 5-phosphate: step 3/6. Functionally, catalyzes the phosphorylation of the position 2 hydroxy group of 4-diphosphocytidyl-2C-methyl-D-erythritol. In Shewanella oneidensis (strain ATCC 700550 / JCM 31522 / CIP 106686 / LMG 19005 / NCIMB 14063 / MR-1), this protein is 4-diphosphocytidyl-2-C-methyl-D-erythritol kinase.